Reading from the N-terminus, the 350-residue chain is Succinylglutamate desuccinylase (350 aa).

Zn(2+) is bound by residues H71, E74, and H169. E233 is a catalytic residue.

It belongs to the AspA/AstE family. Succinylglutamate desuccinylase subfamily. Zn(2+) is required as a cofactor.

The catalysed reaction is N-succinyl-L-glutamate + H2O = L-glutamate + succinate. It functions in the pathway amino-acid degradation; L-arginine degradation via AST pathway; L-glutamate and succinate from L-arginine: step 5/5. In terms of biological role, transforms N(2)-succinylglutamate into succinate and glutamate. This Pseudoalteromonas atlantica (strain T6c / ATCC BAA-1087) protein is Succinylglutamate desuccinylase.